Consider the following 169-residue polypeptide: Ribosome maturation factor RimM (169 aa).

Positions 96–169 constitute a PRC barrel domain; that stretch reads DGEYYWADLI…RILVDWGLDY (74 aa).

The protein belongs to the RimM family. In terms of assembly, binds ribosomal protein uS19.

Its subcellular location is the cytoplasm. An accessory protein needed during the final step in the assembly of 30S ribosomal subunit, possibly for assembly of the head region. Essential for efficient processing of 16S rRNA. May be needed both before and after RbfA during the maturation of 16S rRNA. It has affinity for free ribosomal 30S subunits but not for 70S ribosomes. The polypeptide is Ribosome maturation factor RimM (Chromobacterium violaceum (strain ATCC 12472 / DSM 30191 / JCM 1249 / CCUG 213 / NBRC 12614 / NCIMB 9131 / NCTC 9757 / MK)).